The primary structure comprises 166 residues: uncharacterized protein (166 aa).

The interval 1 to 58 is may interact with smn1; the sequence is MSSEITEGDLQKFHDEHFNAKAVNLWNVAFAQNDRGGNSESANVEYTQSVERYPDGTI.

In terms of assembly, part of the core SMN complex at least composed of smn1, yip11/gem2, gem6, gem7 and gem8. Interacts with smn1; the interaction is direct. Interacts with gem7; the interaction is direct.

Its subcellular location is the cytoplasm. The protein localises to the nucleus. In terms of biological role, the SMN complex catalyzes the assembly of small nuclear ribonucleoproteins (snRNPs), the building blocks of the spliceosome, and thereby plays an important role in the splicing of cellular pre-mRNAs. Most spliceosomal snRNPs contain a common set of Sm proteins SNRPB, SNRPD1, SNRPD2, SNRPD3, SNRPE, SNRPF and SNRPG that assemble in a heptameric protein ring on the Sm site of the small nuclear RNA to form the core snRNP (Sm core). In the cytosol, the Sm proteins SNRPD1, SNRPD2, SNRPE, SNRPF and SNRPG are trapped in an inactive 6S pICln-Sm complex by the chaperone CLNS1A that controls the assembly of the core snRNP. To assemble core snRNPs, the SMN complex accepts the trapped 5Sm proteins from CLNS1A forming an intermediate. Binding of snRNA inside 5Sm triggers eviction of the SMN complex, thereby allowing binding of SNRPD3 and SNRPB to complete assembly of the core snRNP. This is an uncharacterized protein from Schizosaccharomyces pombe (strain 972 / ATCC 24843) (Fission yeast).